The primary structure comprises 144 residues: Putative pre-16S rRNA nuclease (144 aa).

This sequence belongs to the YqgF nuclease family.

The protein resides in the cytoplasm. In terms of biological role, could be a nuclease involved in processing of the 5'-end of pre-16S rRNA. The chain is Putative pre-16S rRNA nuclease from Prochlorococcus marinus (strain NATL1A).